A 135-amino-acid chain; its full sequence is CDGSH iron-sulfur domain-containing protein 2B (135 aa).

The Lumenal portion of the chain corresponds to Met-1–Asp-37. Residues Trp-38–Leu-60 form a helical membrane-spanning segment. Residues Pro-61–Leu-135 are Cytoplasmic-facing. Positions 99, 101, 110, and 114 each coordinate [2Fe-2S] cluster.

The protein belongs to the CISD protein family. CISD2 subfamily. Homodimer. Requires [2Fe-2S] cluster as cofactor.

The protein resides in the endoplasmic reticulum membrane. The protein localises to the mitochondrion outer membrane. Regulator of autophagy that contributes to antagonize becn1-mediated cellular autophagy at the endoplasmic reticulum. Participates in the interaction of bcl2 with becn1 and is required for bcl2-mediated depression of endoplasmic reticulum Ca(2+) stores during autophagy. This is CDGSH iron-sulfur domain-containing protein 2B (cisd2b) from Salmo salar (Atlantic salmon).